The chain runs to 228 residues: UPF0758 protein CKR_0778 (228 aa).

The MPN domain occupies 106–228 (RICSPQDAAV…FISLKEKGIL (123 aa)). 3 residues coordinate Zn(2+): His177, His179, and Asp190. A JAMM motif motif is present at residues 177–190 (HNHPSGDPSPSNED).

Belongs to the UPF0758 family.

The protein is UPF0758 protein CKR_0778 of Clostridium kluyveri (strain NBRC 12016).